The sequence spans 173 residues: Bifunctional protein PyrR (173 aa).

The short motif at 93-105 (VILIDDVLYTGRT) is the PRPP-binding element.

It belongs to the purine/pyrimidine phosphoribosyltransferase family. PyrR subfamily. As to quaternary structure, homodimer and homohexamer; in equilibrium.

It carries out the reaction UMP + diphosphate = 5-phospho-alpha-D-ribose 1-diphosphate + uracil. Functionally, regulates transcriptional attenuation of the pyrimidine nucleotide (pyr) operon by binding in a uridine-dependent manner to specific sites on pyr mRNA. This disrupts an antiterminator hairpin in the RNA and favors formation of a downstream transcription terminator, leading to a reduced expression of downstream genes. Also displays a weak uracil phosphoribosyltransferase activity which is not physiologically significant. This is Bifunctional protein PyrR from Streptococcus pyogenes serotype M12 (strain MGAS2096).